The chain runs to 88 residues: Small ribosomal subunit protein bS20 (88 aa).

A disordered region spans residues M1 to S26. Over residues A7–Q19 the composition is skewed to basic residues.

It belongs to the bacterial ribosomal protein bS20 family.

Binds directly to 16S ribosomal RNA. This Psychrobacter cryohalolentis (strain ATCC BAA-1226 / DSM 17306 / VKM B-2378 / K5) protein is Small ribosomal subunit protein bS20.